A 127-amino-acid polypeptide reads, in one-letter code: Fumarate reductase subunit C (127 aa).

3 helical membrane passes run 30 to 50 (ATILPLIFFTICLTFGLGCLV), 67 to 87 (IVVVLNILALLGSLFHAQTFF), and 107 to 127 (IIVLAQWAAVAAISLFVLVLV).

This sequence belongs to the FrdC family. Part of an enzyme complex containing four subunits: a flavoprotein (FrdA), an iron-sulfur protein (FrdB), and two hydrophobic anchor proteins (FrdC and FrdD).

It localises to the cell inner membrane. Functionally, anchors the catalytic components of the fumarate reductase complex to the cell membrane, binds quinones. In Photobacterium profundum (strain SS9), this protein is Fumarate reductase subunit C.